We begin with the raw amino-acid sequence, 465 residues long: Putative F-box protein At1g21990 (465 aa).

Positions 8–54 constitute an F-box domain; sequence RDLISGSPDEILGKILSFLPTHHAATTSVLSKRWRNLLPLVDKLELT.

In Arabidopsis thaliana (Mouse-ear cress), this protein is Putative F-box protein At1g21990.